A 342-amino-acid chain; its full sequence is Ion-translocating oxidoreductase complex subunit D (342 aa).

A run of 3 helical transmembrane segments spans residues Gly42–Leu62, Asn68–Pro90, and Ala124–Ala144. At Thr171 the chain carries FMN phosphoryl threonine. 5 helical membrane-spanning segments follow: residues Phe200 to Ile220, Trp227 to Ile247, Phe252 to Ala272, Leu286 to Pro306, and Ala308 to Gln328.

The protein belongs to the NqrB/RnfD family. The complex is composed of six subunits: RnfA, RnfB, RnfC, RnfD, RnfE and RnfG. FMN is required as a cofactor.

It localises to the cell inner membrane. In terms of biological role, part of a membrane-bound complex that couples electron transfer with translocation of ions across the membrane. This is Ion-translocating oxidoreductase complex subunit D from Alcanivorax borkumensis (strain ATCC 700651 / DSM 11573 / NCIMB 13689 / SK2).